We begin with the raw amino-acid sequence, 236 residues long: Purine nucleoside phosphorylase DeoD-type (236 aa).

Histidine 4 lines the a purine D-ribonucleoside pocket. Phosphate contacts are provided by residues glycine 20, arginine 24, arginine 43, and 87–90 (RVGT). Residues 179-181 (EME) and 203-204 (SD) each bind a purine D-ribonucleoside. Aspartate 204 functions as the Proton donor in the catalytic mechanism.

This sequence belongs to the PNP/UDP phosphorylase family. Homohexamer; trimer of homodimers.

The catalysed reaction is a purine D-ribonucleoside + phosphate = a purine nucleobase + alpha-D-ribose 1-phosphate. The enzyme catalyses a purine 2'-deoxy-D-ribonucleoside + phosphate = a purine nucleobase + 2-deoxy-alpha-D-ribose 1-phosphate. Functionally, catalyzes the reversible phosphorolytic breakdown of the N-glycosidic bond in the beta-(deoxy)ribonucleoside molecules, with the formation of the corresponding free purine bases and pentose-1-phosphate. This Streptococcus thermophilus (strain ATCC BAA-491 / LMD-9) protein is Purine nucleoside phosphorylase DeoD-type.